We begin with the raw amino-acid sequence, 877 residues long: Envelope glycoprotein gp160 (877 aa).

A signal peptide spans 1–19; that stretch reads MKLTLLIGILLIGIGVVLN. The Extracellular portion of the chain corresponds to 20–707; the sequence is TRQQWVTVFY…SWFDFSKWLN (688 aa). N-linked (GlcNAc...) asparagine; by host glycans are attached at residues asparagine 36, asparagine 69, asparagine 118, asparagine 135, asparagine 148, asparagine 158, asparagine 173, asparagine 204, asparagine 216, asparagine 258, asparagine 261, asparagine 272, asparagine 282, asparagine 288, asparagine 300, asparagine 312, asparagine 322, asparagine 379, asparagine 420, asparagine 431, asparagine 495, and asparagine 498. Disulfide bonds link cysteine 102–cysteine 224, cysteine 109–cysteine 215, cysteine 114–cysteine 174, cysteine 237–cysteine 267, and cysteine 247–cysteine 259. Positions 114–173 are V1; sequence CVELNSSEPTTTPKSTTASTTNITASTTTLPCVQNKTSTVLESCNETIIEKELNEEPASN. The tract at residues 174-215 is V2; that stretch reads CTFAMAGYVRDQKKKYSVVWNDAEIMCKKGNNSNRECYMIHC. The segment at 317–349 is V3; that stretch reads CKRPGNKTVLPVTIMAGLVFHSQRYNTRLRQAW. A disulfide bridge connects residues cysteine 317 and cysteine 350. Cystine bridges form between cysteine 402–cysteine 478 and cysteine 409–cysteine 451. A V4 region spans residues 409 to 451; sequence CKMDWFLNYLNNRTVDPDHNPCNGTKGKGKAPGPCAQRTYVAC. The segment at 494–501 is V5; it reads KNRTNVTL. The segment at 544-564 is fusion peptide; the sequence is VPFVLGFLGFLGAAGTAMGAA. Residues 607–623 form an immunosuppression region; sequence LNARVTALEKYLEDQAR. N-linked (GlcNAc...) asparagine; by host glycans are attached at residues asparagine 652 and asparagine 668. A coiled-coil region spans residues 668 to 692; sequence NITTQLEEARAQEEKNLDAYQKLSS. The MPER; binding to GalCer stretch occupies residues 689-710; sequence KLSSWSDFWSWFDFSKWLNILK. The helical transmembrane segment at 708–728 threads the bilayer; it reads ILKIGFLDVLGIIGLRLLYTV. At 729–877 the chain is on the cytoplasmic side; that stretch reads YSCIARVRQG…VRQGLEGILN (149 aa). The short motif at 739–742 is the YXXL motif; contains endocytosis signal element; it reads YSPL. A disordered region spans residues 751 to 779; it reads WKGQPDNAEGPGEGGDKRKNSSEPWQKES.

As to quaternary structure, the mature envelope protein (Env) consists of a homotrimer of non-covalently associated gp120-gp41 heterodimers. The resulting complex protrudes from the virus surface as a spike. Interacts with host CD4 and CCR5. Gp120 also interacts with the C-type lectins CD209/DC-SIGN and CLEC4M/DC-SIGNR (collectively referred to as DC-SIGN(R)). In terms of assembly, the mature envelope protein (Env) consists of a homotrimer of non-covalently associated gp120-gp41 heterodimers. The resulting complex protrudes from the virus surface as a spike. In terms of processing, specific enzymatic cleavages in vivo yield mature proteins. Envelope glycoproteins are synthesized as an inactive precursor that is heavily N-glycosylated and processed likely by host cell furin in the Golgi to yield the mature SU and TM proteins. The cleavage site between SU and TM requires the minimal sequence [KR]-X-[KR]-R.

The protein localises to the virion membrane. It is found in the host cell membrane. The protein resides in the host endosome membrane. The surface protein gp120 (SU) attaches the virus to the host lymphoid cell by binding to the primary receptor CD4. This interaction induces a structural rearrangement creating a high affinity binding site for a chemokine coreceptor like CCR5. This peculiar 2 stage receptor-interaction strategy allows gp120 to maintain the highly conserved coreceptor-binding site in a cryptic conformation, protected from neutralizing antibodies. These changes are transmitted to the transmembrane protein gp41 and are thought to activate its fusogenic potential by unmasking its fusion peptide. Functionally, surface protein gp120 (SU) may target the virus to gut-associated lymphoid tissue (GALT) by binding host ITGA4/ITGB7 (alpha-4/beta-7 integrins), a complex that mediates T-cell migration to the GALT. Interaction between gp120 and ITGA4/ITGB7 would allow the virus to enter GALT early in the infection, infecting and killing most of GALT's resting CD4+ T-cells. This T-cell depletion is believed to be the major insult to the host immune system leading to AIDS. In terms of biological role, the surface protein gp120 is a ligand for CD209/DC-SIGN and CLEC4M/DC-SIGNR, which are respectively found on dendritic cells (DCs), and on endothelial cells of liver sinusoids and lymph node sinuses. These interactions allow capture of viral particles at mucosal surfaces by these cells and subsequent transmission to permissive cells. DCs are professional antigen presenting cells, critical for host immunity by inducing specific immune responses against a broad variety of pathogens. They act as sentinels in various tissues where they take up antigen, process it, and present it to T-cells following migration to lymphoid organs. SIV subverts the migration properties of dendritic cells to gain access to CD4+ T-cells in lymph nodes. Virus transmission to permissive T-cells occurs either in trans (without DCs infection, through viral capture and transmission), or in cis (following DCs productive infection, through the usual CD4-gp120 interaction), thereby inducing a robust infection. In trans infection, bound virions remain infectious over days and it is proposed that they are not degraded, but protected in non-lysosomal acidic organelles within the DCs close to the cell membrane thus contributing to the viral infectious potential during DCs' migration from the periphery to the lymphoid tissues. On arrival at lymphoid tissues, intact virions recycle back to DCs' cell surface allowing virus transmission to CD4+ T-cells. Virion capture also seems to lead to MHC-II-restricted viral antigen presentation, and probably to the activation of SIV-specific CD4+ cells. Its function is as follows. The transmembrane protein gp41 (TM) acts as a class I viral fusion protein. Under the current model, the protein has at least 3 conformational states: pre-fusion native state, pre-hairpin intermediate state, and post-fusion hairpin state. During fusion of viral and target intracellular membranes, the coiled coil regions (heptad repeats) assume a trimer-of-hairpins structure, positioning the fusion peptide in close proximity to the C-terminal region of the ectodomain. The formation of this structure appears to drive apposition and subsequent fusion of viral and target cell membranes. Complete fusion occurs in host cell endosomes. The virus undergoes clathrin-dependent internalization long before endosomal fusion, thus minimizing the surface exposure of conserved viral epitopes during fusion and reducing the efficacy of inhibitors targeting these epitopes. Membranes fusion leads to delivery of the nucleocapsid into the cytoplasm. The envelope glycoprotein gp160 precursor down-modulates cell surface CD4 antigen by interacting with it in the endoplasmic reticulum and blocking its transport to the cell surface. Functionally, the gp120-gp41 heterodimer allows rapid transcytosis of the virus through CD4 negative cells such as simple epithelial monolayers of the intestinal, rectal and endocervical epithelial barriers. Both gp120 and gp41 specifically recognize glycosphingolipids galactosyl-ceramide (GalCer) or 3' sulfo-galactosyl-ceramide (GalS) present in the lipid rafts structures of epithelial cells. Binding to these alternative receptors allows the rapid transcytosis of the virus through the epithelial cells. This transcytotic vesicle-mediated transport of virions from the apical side to the basolateral side of the epithelial cells does not involve infection of the cells themselves. The polypeptide is Envelope glycoprotein gp160 (env) (Cercopithecidae (Old World monkeys)).